We begin with the raw amino-acid sequence, 230 residues long: 2,3-bisphosphoglycerate-dependent phosphoglycerate mutase (230 aa).

Substrate contacts are provided by residues 8-15, 21-22, R60, 87-90, K98, 114-115, and 183-184; these read RHGESEWN, TG, ERHY, RR, and GN. The Tele-phosphohistidine intermediate role is filled by H9. E87 (proton donor/acceptor) is an active-site residue.

The protein belongs to the phosphoglycerate mutase family. BPG-dependent PGAM subfamily.

The enzyme catalyses (2R)-2-phosphoglycerate = (2R)-3-phosphoglycerate. Its pathway is carbohydrate degradation; glycolysis; pyruvate from D-glyceraldehyde 3-phosphate: step 3/5. In terms of biological role, catalyzes the interconversion of 2-phosphoglycerate and 3-phosphoglycerate. This chain is 2,3-bisphosphoglycerate-dependent phosphoglycerate mutase, found in Streptococcus gordonii (strain Challis / ATCC 35105 / BCRC 15272 / CH1 / DL1 / V288).